We begin with the raw amino-acid sequence, 115 residues long: NADH-ubiquinone oxidoreductase chain 3 (115 aa).

Transmembrane regions (helical) follow at residues 3–23 (LALA…ITFW), 55–75 (FFLV…LLPL), and 86–106 (LTIA…AYEW).

The protein belongs to the complex I subunit 3 family. As to quaternary structure, core subunit of respiratory chain NADH dehydrogenase (Complex I) which is composed of 45 different subunits. Interacts with TMEM186. Interacts with TMEM242.

The protein resides in the mitochondrion inner membrane. The enzyme catalyses a ubiquinone + NADH + 5 H(+)(in) = a ubiquinol + NAD(+) + 4 H(+)(out). Functionally, core subunit of the mitochondrial membrane respiratory chain NADH dehydrogenase (Complex I) which catalyzes electron transfer from NADH through the respiratory chain, using ubiquinone as an electron acceptor. Essential for the catalytic activity of complex I. The protein is NADH-ubiquinone oxidoreductase chain 3 of Hylobates lar (Lar gibbon).